The chain runs to 104 residues: MAVIADPETAQGFRLAGLEGYGASSAEEAQSLLETLVERGGYALVAVDEALLSDPERAVERLMRGRDLPVLLPIAGLKEAFQGHDVEGYMRELVRKTIGFDIKL.

The protein belongs to the V-ATPase F subunit family.

Produces ATP from ADP in the presence of a proton gradient across the membrane. This is V-type ATP synthase subunit F from Thermus thermophilus (strain ATCC BAA-163 / DSM 7039 / HB27).